A 66-amino-acid chain; its full sequence is Large ribosomal subunit protein bL35 (66 aa).

The protein belongs to the bacterial ribosomal protein bL35 family.

The polypeptide is Large ribosomal subunit protein bL35 (Leptospira biflexa serovar Patoc (strain Patoc 1 / Ames)).